Here is a 424-residue protein sequence, read N- to C-terminus: Serine--tRNA ligase (424 aa).

Position 231–233 (231–233 (TAE)) interacts with L-serine. 262-264 (RSE) is an ATP binding site. E285 contributes to the L-serine binding site. 349 to 352 (EISS) is a binding site for ATP. S385 lines the L-serine pocket.

It belongs to the class-II aminoacyl-tRNA synthetase family. Type-1 seryl-tRNA synthetase subfamily. As to quaternary structure, homodimer. The tRNA molecule binds across the dimer.

The protein resides in the cytoplasm. The catalysed reaction is tRNA(Ser) + L-serine + ATP = L-seryl-tRNA(Ser) + AMP + diphosphate + H(+). It carries out the reaction tRNA(Sec) + L-serine + ATP = L-seryl-tRNA(Sec) + AMP + diphosphate + H(+). It functions in the pathway aminoacyl-tRNA biosynthesis; selenocysteinyl-tRNA(Sec) biosynthesis; L-seryl-tRNA(Sec) from L-serine and tRNA(Sec): step 1/1. In terms of biological role, catalyzes the attachment of serine to tRNA(Ser). Is also able to aminoacylate tRNA(Sec) with serine, to form the misacylated tRNA L-seryl-tRNA(Sec), which will be further converted into selenocysteinyl-tRNA(Sec). The sequence is that of Serine--tRNA ligase from Bacillus cereus (strain ZK / E33L).